Consider the following 249-residue polypeptide: Urease accessory protein UreG (249 aa).

Positions 1–13 (MHLGHEEFQRTDG) are enriched in basic and acidic residues. Residues 1–34 (MHLGHEEFQRTDGRASTGPADAGPAGAGRAPRIG) form a disordered region. Residues 18–33 (GPADAGPAGAGRAPRI) show a composition bias toward low complexity. 37–44 (GPVGSGKT) lines the GTP pocket. The segment at 229–249 (PRGGSYDASDASNASQPLNRM) is disordered. Residues 238–249 (DASNASQPLNRM) show a composition bias toward polar residues.

Belongs to the SIMIBI class G3E GTPase family. UreG subfamily. As to quaternary structure, homodimer. UreD, UreF and UreG form a complex that acts as a GTP-hydrolysis-dependent molecular chaperone, activating the urease apoprotein by helping to assemble the nickel containing metallocenter of UreC. The UreE protein probably delivers the nickel.

The protein resides in the cytoplasm. Facilitates the functional incorporation of the urease nickel metallocenter. This process requires GTP hydrolysis, probably effectuated by UreG. This chain is Urease accessory protein UreG, found in Frankia casuarinae (strain DSM 45818 / CECT 9043 / HFP020203 / CcI3).